The sequence spans 160 residues: Endoribonuclease YbeY (160 aa).

Histidine 125, histidine 129, and histidine 135 together coordinate Zn(2+).

Belongs to the endoribonuclease YbeY family. It depends on Zn(2+) as a cofactor.

Its subcellular location is the cytoplasm. In terms of biological role, single strand-specific metallo-endoribonuclease involved in late-stage 70S ribosome quality control and in maturation of the 3' terminus of the 16S rRNA. This is Endoribonuclease YbeY from Leuconostoc citreum (strain KM20).